The primary structure comprises 410 residues: 2-oxoisovalerate dehydrogenase subunit alpha (410 aa).

Belongs to the BCKDHA family. Heterodimer of an alpha and a beta chain. Thiamine diphosphate serves as cofactor.

The enzyme catalyses N(6)-[(R)-lipoyl]-L-lysyl-[protein] + 3-methyl-2-oxobutanoate + H(+) = N(6)-[(R)-S(8)-2-methylpropanoyldihydrolipoyl]-L-lysyl-[protein] + CO2. In terms of biological role, the branched-chain alpha-keto dehydrogenase complex catalyzes the overall conversion of alpha-keto acids to acyl-CoA and CO(2). It contains multiple copies of three enzymatic components: branched-chain alpha-keto acid decarboxylase (E1), lipoamide acyltransferase (E2) and lipoamide dehydrogenase (E3). The protein is 2-oxoisovalerate dehydrogenase subunit alpha (bkdA1) of Pseudomonas putida (Arthrobacter siderocapsulatus).